A 698-amino-acid chain; its full sequence is Serotransferrin (698 aa).

Residues 1-19 (MRFAVGALLACAALGLCLA) form the signal peptide. Transferrin-like domains lie at 25-347 (VKWC…NQRE) and 360-683 (VKWC…NIRK). Disulfide bonds link cysteine 28-cysteine 67 and cysteine 38-cysteine 58. At arginine 42 the chain carries Dimethylated arginine. Fe(3+) contacts are provided by aspartate 82 and tyrosine 114. Cystine bridges form between cysteine 137/cysteine 213, cysteine 156/cysteine 350, cysteine 177/cysteine 193, cysteine 180/cysteine 196, cysteine 190/cysteine 198, cysteine 246/cysteine 260, cysteine 363/cysteine 395, and cysteine 373/cysteine 386. The hydrogencarbonate site is built by threonine 139, arginine 143, alanine 145, and glycine 146. A Fe(3+)-binding site is contributed by tyrosine 207. Residue histidine 268 coordinates Fe(3+). Phosphoserine is present on serine 388. Positions 410 and 447 each coordinate Fe(3+). Intrachain disulfides connect cysteine 420/cysteine 693, cysteine 435/cysteine 656, cysteine 471/cysteine 542, cysteine 495/cysteine 684, cysteine 505/cysteine 519, cysteine 516/cysteine 525, cysteine 582/cysteine 596, and cysteine 634/cysteine 639. 4 residues coordinate hydrogencarbonate: threonine 473, arginine 477, alanine 479, and glycine 480. N-linked (GlcNAc...) asparagine glycosylation is present at asparagine 512. Tyrosine 536 is a binding site for Fe(3+). Residue histidine 604 participates in Fe(3+) binding. Serine 685 carries the phosphoserine modification.

It belongs to the transferrin family. Monomer. Part of a complex composed of SLC40A1/ferroportin, TF/transferrin and HEPH/hephaestin that transfers iron from cells to transferrin. In terms of tissue distribution, expressed by the liver and secreted in plasma.

Its subcellular location is the secreted. Its function is as follows. Transferrins are iron binding transport proteins which can bind two Fe(3+) ions in association with the binding of an anion, usually bicarbonate. It is responsible for the transport of iron from sites of absorption and heme degradation to those of storage and utilization. Serum transferrin may also have a further role in stimulating cell proliferation. The protein is Serotransferrin (Tf) of Rattus norvegicus (Rat).